Reading from the N-terminus, the 556-residue chain is 2-succinyl-5-enolpyruvyl-6-hydroxy-3-cyclohexene-1-carboxylate synthase (556 aa).

The protein belongs to the TPP enzyme family. MenD subfamily. In terms of assembly, homodimer. It depends on Mg(2+) as a cofactor. Requires Mn(2+) as cofactor. The cofactor is thiamine diphosphate.

The enzyme catalyses isochorismate + 2-oxoglutarate + H(+) = 5-enolpyruvoyl-6-hydroxy-2-succinyl-cyclohex-3-ene-1-carboxylate + CO2. It functions in the pathway quinol/quinone metabolism; 1,4-dihydroxy-2-naphthoate biosynthesis; 1,4-dihydroxy-2-naphthoate from chorismate: step 2/7. The protein operates within quinol/quinone metabolism; menaquinone biosynthesis. Its function is as follows. Catalyzes the thiamine diphosphate-dependent decarboxylation of 2-oxoglutarate and the subsequent addition of the resulting succinic semialdehyde-thiamine pyrophosphate anion to isochorismate to yield 2-succinyl-5-enolpyruvyl-6-hydroxy-3-cyclohexene-1-carboxylate (SEPHCHC). This Staphylococcus epidermidis (strain ATCC 35984 / DSM 28319 / BCRC 17069 / CCUG 31568 / BM 3577 / RP62A) protein is 2-succinyl-5-enolpyruvyl-6-hydroxy-3-cyclohexene-1-carboxylate synthase.